The sequence spans 1047 residues: Atrial natriuretic peptide receptor 2 (1047 aa).

The signal sequence occupies residues 1–16 (MALPSLLLVVAALAGG). Over 17-458 (VRPPGARNLT…DKTPLSTLAI (442 aa)) the chain is Extracellular. 2 N-linked (GlcNAc...) asparagine glycosylation sites follow: Asn24 and Asn35. A disulfide bond links Cys75 and Cys101. N-linked (GlcNAc...) asparagine glycans are attached at residues Asn161, Asn195, Asn244, Asn277, and Asn349. The chain crosses the membrane as a helical span at residues 459-478 (VALGTGITFIMFGVSSFLIF). At 479–1047 (RKLMLEKELA…GERKGPPGLL (569 aa)) the chain is on the cytoplasmic side. Ser513 bears the Phosphoserine mark. Residues 513–786 (SRLTLSLRGS…PDFGQIKGFI (274 aa)) enclose the Protein kinase domain. The residue at position 516 (Thr516) is a Phosphothreonine. 4 positions are modified to phosphoserine: Ser518, Ser522, Ser523, and Ser526. Residue Thr529 is modified to Phosphothreonine. The Guanylate cyclase domain maps to 861-991 (TIYFSDIVGF…DTVNTASRME (131 aa)).

The protein belongs to the adenylyl cyclase class-4/guanylyl cyclase family. Phosphorylated. Phosphorylation of the protein kinase-like domain is required for full activation by CNP. Post-translationally, glycosylated.

It localises to the cell membrane. It carries out the reaction GTP = 3',5'-cyclic GMP + diphosphate. Functionally, receptor for the C-type natriuretic peptide NPPC/CNP hormone. Has guanylate cyclase activity upon binding of its ligand. May play a role in the regulation of skeletal growth. This Rattus norvegicus (Rat) protein is Atrial natriuretic peptide receptor 2 (Npr2).